We begin with the raw amino-acid sequence, 140 residues long: L-fucose mutarotase (140 aa).

His-22 serves as the catalytic Proton donor. Substrate contacts are provided by residues Asp-30, Arg-107, and 129-131; that span reads YGN.

The protein belongs to the RbsD / FucU family. FucU mutarotase subfamily. In terms of assembly, homodecamer.

Its subcellular location is the cytoplasm. It carries out the reaction alpha-L-fucose = beta-L-fucose. The protein operates within carbohydrate metabolism; L-fucose metabolism. In terms of biological role, involved in the anomeric conversion of L-fucose. In Klebsiella pneumoniae (strain 342), this protein is L-fucose mutarotase.